The sequence spans 744 residues: Endonuclease MutS2 (744 aa).

315-322 (GPNMGGKT) is a binding site for ATP. The Smr domain occupies 668–743 (VDLRGLTVAE…GHGVTVVALR (76 aa)).

It belongs to the DNA mismatch repair MutS family. MutS2 subfamily. Homodimer. Interacts with MutL. Binds to stalled ribosomes, contacting rRNA.

Nuclease activity is stimulated by interaction with MutL. ATPase activity is stimulated by dsDNA. Its function is as follows. Endonuclease that is involved in the suppression of homologous recombination and may thus have a key role in the control of bacterial genetic diversity. Cleaves the phosphate backbone of oligodeoxynucleotides non-sequence-specifically at the 3' side of the phosphates. Preferably incises the branched DNA structures, especially the D-loop structure over the Holliday junction. Has ATPase activity. Binds to dsDNA but not to ssDNA. Functionally, acts as a ribosome collision sensor, splitting the ribosome into its 2 subunits. Detects stalled/collided 70S ribosomes which it binds and splits by an ATP-hydrolysis driven conformational change. Acts upstream of the ribosome quality control system (RQC), a ribosome-associated complex that mediates the extraction of incompletely synthesized nascent chains from stalled ribosomes and their subsequent degradation. Probably generates substrates for RQC. The protein is Endonuclease MutS2 of Thermus thermophilus (strain ATCC 27634 / DSM 579 / HB8).